Consider the following 144-residue polypeptide: Large ribosomal subunit protein uL16 (144 aa).

This sequence belongs to the universal ribosomal protein uL16 family. As to quaternary structure, part of the 50S ribosomal subunit.

Functionally, binds 23S rRNA and is also seen to make contacts with the A and possibly P site tRNAs. The chain is Large ribosomal subunit protein uL16 from Lactiplantibacillus plantarum (strain ATCC BAA-793 / NCIMB 8826 / WCFS1) (Lactobacillus plantarum).